The primary structure comprises 95 residues: Co-chaperonin GroES (95 aa).

Belongs to the GroES chaperonin family. As to quaternary structure, heptamer of 7 subunits arranged in a ring. Interacts with the chaperonin GroEL.

It is found in the cytoplasm. Functionally, together with the chaperonin GroEL, plays an essential role in assisting protein folding. The GroEL-GroES system forms a nano-cage that allows encapsulation of the non-native substrate proteins and provides a physical environment optimized to promote and accelerate protein folding. GroES binds to the apical surface of the GroEL ring, thereby capping the opening of the GroEL channel. This chain is Co-chaperonin GroES, found in Xanthomonas axonopodis pv. citri (strain 306).